Reading from the N-terminus, the 265-residue chain is Isoprenyl transferase 1 (265 aa).

Residue Asp-43 is part of the active site. Asp-43 lines the Mg(2+) pocket. Residues 44–47 (GNRR), Trp-48, His-61, and 89–91 (STE) each bind substrate. Asn-92 functions as the Proton acceptor in the catalytic mechanism. Residues Arg-95, Arg-214, and 220–222 (RLS) contribute to the substrate site. Residue Glu-233 participates in Mg(2+) binding.

It belongs to the UPP synthase family. As to quaternary structure, homodimer. It depends on Mg(2+) as a cofactor.

Its function is as follows. Catalyzes the condensation of isopentenyl diphosphate (IPP) with allylic pyrophosphates generating different type of terpenoids. In Corynebacterium diphtheriae (strain ATCC 700971 / NCTC 13129 / Biotype gravis), this protein is Isoprenyl transferase 1.